We begin with the raw amino-acid sequence, 185 residues long: MHHPARELPFPDALRPGARPAPHPLLAPVTGYLGTWRGTGSGGYPTLDADFSYAQEVTFSHDGRPFLAYEARAWLLDADGQPLRPSARETGWWRLQPDGRVEALITQPTGIAEISVGHARDGAVDLATERVALAPTAKEVDATRRRYTLTDPDTLTFVHDLAAVGRPLQHHLSARLRREAPGQGI.

The interval 1 to 21 (MHHPARELPFPDALRPGARPA) is disordered. Positions 34–40 (GTWRGTG) match the GXWXGXG motif. His171 serves as a coordination point for heme b.

Belongs to the nitrobindin family. Homodimer. Heme b serves as cofactor.

The catalysed reaction is peroxynitrite = nitrate. It functions in the pathway nitrogen metabolism. Its function is as follows. Heme-binding protein able to scavenge peroxynitrite and to protect free L-tyrosine against peroxynitrite-mediated nitration, by acting as a peroxynitrite isomerase that converts peroxynitrite to nitrate. Therefore, this protein likely plays a role in peroxynitrite sensing and in the detoxification of reactive nitrogen and oxygen species (RNS and ROS, respectively). Is able to bind nitric oxide (NO) in vitro, but may act as a sensor of peroxynitrite levels in vivo. The chain is Peroxynitrite isomerase from Streptomyces griseus subsp. griseus (strain JCM 4626 / CBS 651.72 / NBRC 13350 / KCC S-0626 / ISP 5235).